The chain runs to 495 residues: ATP synthase subunit beta, chloroplastic (495 aa).

172 to 179 (GGAGVGKT) serves as a coordination point for ATP.

This sequence belongs to the ATPase alpha/beta chains family. As to quaternary structure, F-type ATPases have 2 components, CF(1) - the catalytic core - and CF(0) - the membrane proton channel. CF(1) has five subunits: alpha(3), beta(3), gamma(1), delta(1), epsilon(1). CF(0) has four main subunits: a(1), b(1), b'(1) and c(9-12).

Its subcellular location is the plastid. It is found in the chloroplast thylakoid membrane. The catalysed reaction is ATP + H2O + 4 H(+)(in) = ADP + phosphate + 5 H(+)(out). In terms of biological role, produces ATP from ADP in the presence of a proton gradient across the membrane. The catalytic sites are hosted primarily by the beta subunits. In Scilla siberica (Siberian squill), this protein is ATP synthase subunit beta, chloroplastic.